Reading from the N-terminus, the 403-residue chain is Peroxisomal membrane protein PEX13 (403 aa).

Over residues 1-11 (MASQPPPPPKP) the composition is skewed to pro residues. The interval 1–68 (MASQPPPPPK…PSQQTGSSSV (68 aa)) is disordered. Topologically, residues 1-134 (MASQPPPPPK…SSRGAFQSIE (134 aa)) are peroxisomal matrix. The span at 59–68 (PSQQTGSSSV) shows a compositional bias: polar residues. A helical transmembrane segment spans residues 135-155 (SIVHAFASVSMMMDATFSAVY). Residues 145–233 (MMMDATFSAV…EDRAATSAKS (89 aa)) form a targeting to peroxisomes region. The Cytoplasmic portion of the chain corresponds to 156-174 (NSFRAVLDVANHFSRLKIH). Residues 175–192 (FTKVFSAFALVRTIRYLY) form a helical membrane-spanning segment. An interaction with PEX19 region spans residues 175-196 (FTKVFSAFALVRTIRYLYRRLQ). At 193 to 233 (RRLQRMLGLRRGSENEDLWAESEGTVACLGAEDRAATSAKS) the chain is on the peroxisomal matrix side. A helical membrane pass occupies residues 234-254 (WPIFLFFAVILGGPYLIWKLL). At 255–403 (STHSDEVTDS…IGKDGEKQDL (149 aa)) the chain is on the cytoplasmic side. An SH3 domain is found at 272-336 (DDHVVARAEY…PANYVKILGK (65 aa)). S354 carries the post-translational modification Phosphoserine.

This sequence belongs to the peroxin-13 family. In terms of assembly, interacts (via SH3 domain) with PEX14 (via SH3-binding motif); forming the PEX13-PEX14 docking complex. Interacts with PEX19.

The protein localises to the peroxisome membrane. Its function is as follows. Component of the PEX13-PEX14 docking complex, a translocon channel that specifically mediates the import of peroxisomal cargo proteins bound to PEX5 receptor. The PEX13-PEX14 docking complex forms a large import pore which can be opened to a diameter of about 9 nm. Mechanistically, PEX5 receptor along with cargo proteins associates with the PEX14 subunit of the PEX13-PEX14 docking complex in the cytosol, leading to the insertion of the receptor into the organelle membrane with the concomitant translocation of the cargo into the peroxisome matrix. Involved in the import of PTS1- and PTS2-type containing proteins. The polypeptide is Peroxisomal membrane protein PEX13 (Homo sapiens (Human)).